Here is a 723-residue protein sequence, read N- to C-terminus: Polyribonucleotide nucleotidyltransferase (723 aa).

2 residues coordinate Mg(2+): Asp488 and Asp494. Positions Pro555–Ile614 constitute a KH domain. The S1 motif domain occupies Gly624–Lys692. Residues Ser701–Gln723 form a disordered region. Residues Ala707–Gln723 are compositionally biased toward low complexity.

The protein belongs to the polyribonucleotide nucleotidyltransferase family. Mg(2+) is required as a cofactor.

Its subcellular location is the cytoplasm. The catalysed reaction is RNA(n+1) + phosphate = RNA(n) + a ribonucleoside 5'-diphosphate. Its function is as follows. Involved in mRNA degradation. Catalyzes the phosphorolysis of single-stranded polyribonucleotides processively in the 3'- to 5'-direction. This chain is Polyribonucleotide nucleotidyltransferase, found in Cupriavidus taiwanensis (strain DSM 17343 / BCRC 17206 / CCUG 44338 / CIP 107171 / LMG 19424 / R1) (Ralstonia taiwanensis (strain LMG 19424)).